A 96-amino-acid polypeptide reads, in one-letter code: Citrate lyase acyl carrier protein (96 aa).

O-(phosphoribosyl dephospho-coenzyme A)serine is present on Ser-14.

The protein belongs to the CitD family. In terms of assembly, oligomer with a subunit composition of (alpha,beta,gamma)6.

The protein resides in the cytoplasm. Its function is as follows. Covalent carrier of the coenzyme of citrate lyase. The protein is Citrate lyase acyl carrier protein of Pectobacterium atrosepticum (strain SCRI 1043 / ATCC BAA-672) (Erwinia carotovora subsp. atroseptica).